The sequence spans 430 residues: Adenylosuccinate synthetase (430 aa).

GTP-binding positions include 12 to 18 and 40 to 42; these read GDEGKGK and GHT. Aspartate 13 (proton acceptor) is an active-site residue. Mg(2+) is bound by residues aspartate 13 and glycine 40. IMP-binding positions include 13-16, 38-41, threonine 130, arginine 144, glutamine 224, threonine 239, and arginine 303; these read DEGK and NAGH. Histidine 41 serves as the catalytic Proton donor. 299–305 is a substrate binding site; sequence VNTGRKR. GTP-binding positions include arginine 305, 331-333, and 413-415; these read KLD and STS.

The protein belongs to the adenylosuccinate synthetase family. As to quaternary structure, homodimer. It depends on Mg(2+) as a cofactor.

It localises to the cytoplasm. The catalysed reaction is IMP + L-aspartate + GTP = N(6)-(1,2-dicarboxyethyl)-AMP + GDP + phosphate + 2 H(+). It participates in purine metabolism; AMP biosynthesis via de novo pathway; AMP from IMP: step 1/2. Its function is as follows. Plays an important role in the de novo pathway of purine nucleotide biosynthesis. Catalyzes the first committed step in the biosynthesis of AMP from IMP. This is Adenylosuccinate synthetase from Nitrobacter hamburgensis (strain DSM 10229 / NCIMB 13809 / X14).